The chain runs to 102 residues: Large ribosomal subunit protein bL21 (102 aa).

This sequence belongs to the bacterial ribosomal protein bL21 family. In terms of assembly, part of the 50S ribosomal subunit. Contacts protein L20.

Functionally, this protein binds to 23S rRNA in the presence of protein L20. The chain is Large ribosomal subunit protein bL21 from Bacillus licheniformis (strain ATCC 14580 / DSM 13 / JCM 2505 / CCUG 7422 / NBRC 12200 / NCIMB 9375 / NCTC 10341 / NRRL NRS-1264 / Gibson 46).